The primary structure comprises 157 residues: Aspartate carbamoyltransferase regulatory chain (157 aa).

The Zn(2+) site is built by Cys108, Cys113, Cys138, and Cys141.

The protein belongs to the PyrI family. As to quaternary structure, contains catalytic and regulatory chains. Zn(2+) is required as a cofactor.

Involved in allosteric regulation of aspartate carbamoyltransferase. In Ignicoccus hospitalis (strain KIN4/I / DSM 18386 / JCM 14125), this protein is Aspartate carbamoyltransferase regulatory chain.